Reading from the N-terminus, the 97-residue chain is Co-chaperonin GroES (97 aa).

Belongs to the GroES chaperonin family. Heptamer of 7 subunits arranged in a ring. Interacts with the chaperonin GroEL.

The protein resides in the cytoplasm. In terms of biological role, together with the chaperonin GroEL, plays an essential role in assisting protein folding. The GroEL-GroES system forms a nano-cage that allows encapsulation of the non-native substrate proteins and provides a physical environment optimized to promote and accelerate protein folding. GroES binds to the apical surface of the GroEL ring, thereby capping the opening of the GroEL channel. The sequence is that of Co-chaperonin GroES from Salmonella agona (strain SL483).